Here is a 998-residue protein sequence, read N- to C-terminus: Kinesin-like protein KIF19 (998 aa).

The Kinesin motor domain occupies 11-346; that stretch reads QLMVALRVRP…LTYAGRAKNI (336 aa). ATP is bound at residue 104–111; sequence GPTGCGKT. 2 coiled-coil regions span residues 360–391 and 424–452; these read HIAQYTSIIADLRGEIQRLKRKIDEQTGRGQA and EQLASAFQEQMDVRRRLLELENRAMEVQI. A compositionally biased stretch (basic and acidic residues) spans 482-494; that stretch reads ECYAKDDSEKDSD. The segment at 482–503 is disordered; sequence ECYAKDDSEKDSDTGDDQPDIL. Positions 507–552 form a coiled coil; sequence EVAAARESIAALVDEQKQLRKQKLALEQRCRELRARGRRLEETLPR. 4 stretches are compositionally biased toward polar residues: residues 662–676, 684–697, 746–761, and 836–852; these read SSLPKITPAGTSLTP, KTLSSDAQHLQNSA, SLGSWINSSPDSSENL, and TLQHAASEDNLSSSTGE. Disordered stretches follow at residues 662–706, 746–765, 794–911, and 948–998; these read SSLP…TESE, SLGSWINSSPDSSENLSEIP, GTEG…THLL, and KLPP…SRHN. A compositionally biased stretch (basic and acidic residues) spans 989-998; it reads HGKDGCSRHN.

It belongs to the TRAFAC class myosin-kinesin ATPase superfamily. Kinesin family.

The protein localises to the cytoplasm. Its subcellular location is the cytoskeleton. It localises to the cell projection. The protein resides in the cilium. In terms of biological role, plus end-directed microtubule-dependent motor protein that regulates the length of motile cilia by mediating depolymerization of microtubules at ciliary tips. This Homo sapiens (Human) protein is Kinesin-like protein KIF19 (KIF19).